The primary structure comprises 3289 residues: tRNA nuclease CdiA (3289 aa).

The N-terminal stretch at 1–32 (MHQPPVRFTYRLLSYLISTIIAGQPLLPAVGA) is a signal peptide. Positions 36 to 322 (PQNGAGMDKA…AGGNLSVSSR (287 aa)) are two-partner system transport domain (TPS). The FHA-1 stretch occupies residues 351–1398 (EKLTAGRDVT…IVVRTGHLLN (1048 aa)). Positions 595 to 615 (AVNASEKLTHSGKSSAPSLSL) are disordered. Residues 1399–1689 (QREGFSATTT…LTGQTGISDD (291 aa)) form a receptor binding domain (RBD) region. Residues 1690–1874 (WPLPSGNNGY…LSPEDITLHN (185 aa)) are YP domain. The segment at 1875-1935 (GSVISGNNVQ…DLSAIGDISN (61 aa)) is periplasmic FHA-1 repeat (pFR). The segment at 1979-2653 (TDTGPVATIK…TSKYDSKQTS (675 aa)) is FHA-2. Basic and acidic residues predominate over residues 2097–2113 (RESKNSRNGRSESHESH). Disordered stretches follow at residues 2097–2116 (RESK…HAAV), 2332–2356 (GSSK…TIGS), and 2466–2513 (TGDP…TGKN). 2 stretches are compositionally biased toward polar residues: residues 2344 to 2356 (GTTQ…TIGS) and 2472 to 2507 (TGVS…NLSV). A pretoxin (PT) domain region spans residues 2992–3034 (SDLSEEQKQTISTLATVSAGLAGGLTGNSTASAAVGAQSGKNA). The VENN CT cleavage motif signature appears at 3035–3038 (VENN). Residues 3035-3289 (VENNYLSVSE…VGHIQPVKVK (255 aa)) are C-terminal effector domain (CT); has tRNase activity. Residues 3039-3197 (YLSVSEKTEL…PLIGQAASNK (159 aa)) form an inner membrane translocation domain (IMTD), targets protein to PtsG region.

The protein in the N-terminal section; belongs to the CdiA toxin family. In terms of assembly, forms a contact-dependent growth inhibition complex of CdiA-CT-NC101, CdiI-NC101 and EF-Tu; the complex is a dimer of heterotrimers. Stable CdiA-CT-NC101, EF-Tu complexes are not detected, nor are complexes with EF-Ts.

The protein localises to the secreted. The protein resides in the target cell. It is found in the target cell cytoplasm. Its function is as follows. Toxic component of a toxin-immunity protein module, which functions as a cellular contact-dependent growth inhibition (CDI) system. CDI modules allow bacteria to communicate with and inhibit the growth of closely related neighboring bacteria in a contact-dependent fashion (target cell counts decrease about 10,0000-fold for this system). CdiA toxicity is neutralized by its cognate immunity protein CdiI-NC101, but not by CdiI from other bacteria. The C-terminal domain (CT) cleaves tRNA endonucleolytically at the 5' side of guanine discriminator nucleotide sites (removes the last 4 nucleotides of the tRNA acceptor arm when the first nucleotide to be removed is G). Requires EF-Ts (tsf) for toxic function of the CT domain in vivo. In vitro the CT tRNase activity requires both EF-Tu (tufA) and EF-Ts. EF-Ts probably increases steady-state GTP-EF-Tu-aa-tRNA substrate levels. The CT domain is thought to remodel this same complex to displace the 3'-end of the aa-tRNA and allow it to enter into the toxin active site. The CT domain gains access to the cytoplasm of target cells by using integral inner membrane protein PTS system glucose-specific EIICB component (ptsG). Functionally, the CdiA protein is thought to be exported from the cell through the central lumen of CdiB, the other half of its two-partner system (TPS). The TPS domain probably remains associated with CdiB while the FHA-1 domain forms an extended filament with the receptor-binding domain (RBD) at its extremity; in the secretion arrested state the C-terminus of the RBD and YP domains form a hairpin-like structure as the FHA-2, PT and CT domains are periplasmic. The YP domain is probably responsible for this arrest at the point where it re-enters the host cell periplasm. Upon binding to a target cell outer membrane receptor a signal is transmitted to activate secretion. The filament elongates slightly, the rest of CdiA is secreted and the FHA-2 domain becomes stably associated with the target cell's outer membrane where it facilitates entry of the toxic CT domain into the target cell periplasm. From there the toxic CT domain is cleaved and gains access to the target cell cytoplasm via an inner membrane protein (PtsG for this CDI). This is tRNA nuclease CdiA from Escherichia coli (strain NC101).